A 23-amino-acid chain; its full sequence is Coenzyme PQQ synthesis protein A (23 aa).

The pyrroloquinoline quinone (Glu-Tyr) cross-link spans Glu15–Tyr19.

It belongs to the PqqA family.

Its pathway is cofactor biosynthesis; pyrroloquinoline quinone biosynthesis. Its function is as follows. Required for coenzyme pyrroloquinoline quinone (PQQ) biosynthesis. PQQ is probably formed by cross-linking a specific glutamate to a specific tyrosine residue and excising these residues from the peptide. In Pseudomonas aeruginosa (strain UCBPP-PA14), this protein is Coenzyme PQQ synthesis protein A.